A 685-amino-acid polypeptide reads, in one-letter code: DNA-directed RNA polymerase subunit beta' (685 aa).

Residues Cys69, Cys71, Cys87, and Cys90 each coordinate Zn(2+). The Mg(2+) site is built by Asp489, Asp491, and Asp493.

It belongs to the RNA polymerase beta' chain family. RpoC1 subfamily. In plastids the minimal PEP RNA polymerase catalytic core is composed of four subunits: alpha, beta, beta', and beta''. When a (nuclear-encoded) sigma factor is associated with the core the holoenzyme is formed, which can initiate transcription. Mg(2+) is required as a cofactor. It depends on Zn(2+) as a cofactor.

It localises to the plastid. Its subcellular location is the chloroplast. The enzyme catalyses RNA(n) + a ribonucleoside 5'-triphosphate = RNA(n+1) + diphosphate. DNA-dependent RNA polymerase catalyzes the transcription of DNA into RNA using the four ribonucleoside triphosphates as substrates. The sequence is that of DNA-directed RNA polymerase subunit beta' from Buxus microphylla (Littleleaf boxwood).